The sequence spans 520 residues: Protein-export membrane protein SecD (520 aa).

6 consecutive transmembrane segments (helical) span residues 10–30, 364–384, 391–411, 417–437, 461–481, and 483–503; these read IILLVIVVIVSLFALVSPTLA, DSLLAGLVAVFAVSGVVFLRY, LPMIVTALSEVLILLGFAAGI, LSVIAGFITVIGTGVDDLVII, FWVIGAAAATTIIAMSPLAIL, and LGDLQGFAIFTILGVLVGVLI.

Belongs to the SecD/SecF family. SecD subfamily. Part of the protein translocation apparatus. Forms a complex with SecF.

The protein resides in the cell membrane. Involved in protein export. The protein is Protein-export membrane protein SecD of Haloquadratum walsbyi (strain DSM 16790 / HBSQ001).